The chain runs to 528 residues: Potassium voltage-gated channel subfamily A member 3 (528 aa).

The tract at residues 1 to 32 (MTVVPGDHLLEPEAAGGGGGDPPQGGCGSGGG) is disordered. Over 1–187 (MTVVPGDHLL…EYPESSGPAR (187 aa)) the chain is Cytoplasmic. Over residues 15–32 (AGGGGGDPPQGGCGSGGG) the composition is skewed to gly residues. The helical transmembrane segment at 188–206 (GIAIVSVLVILISIVIFCL) threads the bilayer. Over 207 to 247 (ETLPEFRDEKDYPASPSQDVFEAANNSTSGAPSGASSFSDP) the chain is Extracellular. The N-linked (GlcNAc...) asparagine glycan is linked to Asn232. A helical membrane pass occupies residues 248-269 (FFVVETLCIIWFSFELLVRFFA). Cys270 is lipidated: S-palmitoyl cysteine. The Cytoplasmic segment spans residues 270-280 (CPSKATFSRNI). Residues 281–301 (MNLIDIVAIIPYFITLGTELA) form a helical membrane-spanning segment. The Extracellular segment spans residues 302–315 (ERQGNGQQAMSLAI). The helical; Voltage-sensor transmembrane segment at 316–334 (LRVIRLVRVFRIFKLSRHS) threads the bilayer. Over 335–350 (KGLQILGQTLKASMRE) the chain is Cytoplasmic. Residues 351-370 (LGLLIFFLFIGVILFSSAVY) form a helical membrane-spanning segment. The Extracellular portion of the chain corresponds to 371 to 411 (FAEADDPSSGFNSIPDAFWWAVVTMTTVGYGDMHPVTIGGK). The Selectivity filter motif lies at 397-402 (TVGYGD). A helical membrane pass occupies residues 412–434 (IVGSLCAIAGVLTIALPVPVIVS). At 435–528 (NFNYFYHRET…VNIKKIFTDV (94 aa)) the chain is on the cytoplasmic side. The interaction with KCNE4 stretch occupies residues 435 to 528 (NFNYFYHRET…VNIKKIFTDV (94 aa)). Residue Tyr452 is modified to Phosphotyrosine. Ser473 carries the post-translational modification Phosphoserine; by PKA. A PDZ-binding motif is present at residues 526–528 (TDV).

Belongs to the potassium channel family. A (Shaker) (TC 1.A.1.2) subfamily. Kv1.3/KCNA3 sub-subfamily. As to quaternary structure, homotetramer. Forms heterooligomers with KCNE4 which inhibits KCNA3 activity by impairing localization to the cell membrane. The stoichiometry of KCNA3 and KCNE4 in the heterooligomers are 4:1, 4:2, 4:3 or 4:4 respectively. Increasing the number of KCNE4 subunits steadily slows the activation KCNA3 and decreases its abundance at the cell membrane. However, a single subunit of KCNE4 is sufficient for the cooperative enhancement of the inactivating function of the channel. Interacts with SEC24D; this interaction is reduced in the presence of KCNE4. Interacts with DLG1, DLG2 and DLG4 via their PDZ domains. Post-translationally, N-glycosylation promotes the cell surface expression. In terms of processing, phosphorylation on Tyr-452 inhibits its channel activity.

The protein resides in the cell membrane. The enzyme catalyses K(+)(in) = K(+)(out). Its activity is regulated as follows. Activity is up-regulated by JAK2. Mediates the voltage-dependent potassium ion permeability of excitable membranes. Assuming opened or closed conformations in response to the voltage difference across the membrane, the protein forms a potassium-selective channel through which potassium ions may pass in accordance with their electrochemical gradient. The polypeptide is Potassium voltage-gated channel subfamily A member 3 (Kcna3) (Mus musculus (Mouse)).